Here is a 461-residue protein sequence, read N- to C-terminus: Acetylcholine receptor subunit alpha (461 aa).

The N-terminal stretch at 1-24 (MILCSYWHVGLVLLLFSCCGLVLG) is a signal peptide. Residues 25–234 (SEHETRLVAN…ITYHFIMQRI (210 aa)) lie on the Extracellular side of the membrane. Cystine bridges form between Cys-152/Cys-166 and Cys-216/Cys-217. The N-linked (GlcNAc...) asparagine glycan is linked to Asn-165. Helical transmembrane passes span 235–259 (PLYF…VFYL), 267–285 (MTLS…LVIV), and 301–320 (YMLF…VVVI). Topologically, residues 321–432 (NTHHRSPSTH…WKYVAMVIDH (112 aa)) are cytoplasmic. The helical transmembrane segment at 433-451 (ILLCVFMLICIIGTVSVFA) threads the bilayer.

It belongs to the ligand-gated ion channel (TC 1.A.9) family. Acetylcholine receptor (TC 1.A.9.1) subfamily. Alpha-1/CHRNA1 sub-subfamily. Pentamer of two alpha chains, and one each of the beta, delta, and gamma chains.

The protein localises to the postsynaptic cell membrane. It localises to the cell membrane. It carries out the reaction K(+)(in) = K(+)(out). The catalysed reaction is Na(+)(in) = Na(+)(out). In terms of biological role, upon acetylcholine binding, the AChR responds by an extensive change in conformation that affects all subunits and leads to opening of an ion-conducting channel across the plasma membrane. This Torpedo marmorata (Marbled electric ray) protein is Acetylcholine receptor subunit alpha (CHRNA1).